The following is a 40-amino-acid chain: Photosystem II reaction center protein Y (40 aa).

The helical transmembrane segment at 5–23 (LIVVLAPILLAGGWAVFNI) threads the bilayer.

This sequence belongs to the PsbY family. As to quaternary structure, PSII is composed of 1 copy each of membrane proteins PsbA, PsbB, PsbC, PsbD, PsbE, PsbF, PsbH, PsbI, PsbJ, PsbK, PsbL, PsbM, PsbT, PsbX, PsbY, PsbZ, Psb30/Ycf12, peripheral proteins PsbO, CyanoQ (PsbQ), PsbU, PsbV and a large number of cofactors. It forms dimeric complexes.

The protein resides in the cellular thylakoid membrane. In terms of biological role, loosely associated component of the core of photosystem II (PSII), it is not always seen in crystals. PSII is a light-driven water plastoquinone oxidoreductase, using light energy to abstract electrons from H(2)O, generating a proton gradient subsequently used for ATP formation. This Synechococcus elongatus (strain ATCC 33912 / PCC 7942 / FACHB-805) (Anacystis nidulans R2) protein is Photosystem II reaction center protein Y.